A 296-amino-acid chain; its full sequence is Formamidopyrimidine-DNA glycosylase (296 aa).

P2 (schiff-base intermediate with DNA) is an active-site residue. E3 acts as the Proton donor in catalysis. Residue K58 is the Proton donor; for beta-elimination activity of the active site. 3 residues coordinate DNA: H104, R126, and K169. The FPG-type zinc-finger motif lies at 260–296 (SVYDREGQACGTPGCGGTVARIVQAGRSTFYCAACQK). R286 functions as the Proton donor; for delta-elimination activity in the catalytic mechanism.

This sequence belongs to the FPG family. As to quaternary structure, monomer. Requires Zn(2+) as cofactor.

The catalysed reaction is Hydrolysis of DNA containing ring-opened 7-methylguanine residues, releasing 2,6-diamino-4-hydroxy-5-(N-methyl)formamidopyrimidine.. It carries out the reaction 2'-deoxyribonucleotide-(2'-deoxyribose 5'-phosphate)-2'-deoxyribonucleotide-DNA = a 3'-end 2'-deoxyribonucleotide-(2,3-dehydro-2,3-deoxyribose 5'-phosphate)-DNA + a 5'-end 5'-phospho-2'-deoxyribonucleoside-DNA + H(+). Its function is as follows. Involved in base excision repair of DNA damaged by oxidation or by mutagenic agents. Acts as a DNA glycosylase that recognizes and removes damaged bases. Has a preference for oxidized purines, such as 7,8-dihydro-8-oxoguanine (8-oxoG). Has AP (apurinic/apyrimidinic) lyase activity and introduces nicks in the DNA strand. Cleaves the DNA backbone by beta-delta elimination to generate a single-strand break at the site of the removed base with both 3'- and 5'-phosphates. The sequence is that of Formamidopyrimidine-DNA glycosylase from Rhizobium etli (strain CIAT 652).